Reading from the N-terminus, the 285-residue chain is MRGKHIFIITALISILMLAACGQKNSSATVATATDSTITKSDFEKQLKDRYGKDMLYEMIAQDVITKKYKVSDDDVDKEVQKAKSQYGDQFKNVLKNNGLKDEADFKNQIKFKLSMNKAIKQSVTEKDVKDHYKPEIKASHILVSDENEAKEIKKKLDTGASFEELAKQESQDLLSKEKGGDLGYFHSGAMTPEFETAAYKLKIGQISDPVQSPNGYHIIKLTGKKDLKPYDEVKNSIRKNLEEERTADPIFGKKLLQSELKKANIKINDSELEDTFTIVSPQGN.

An N-terminal signal peptide occupies residues 1–20; sequence MRGKHIFIITALISILMLAA. Cys21 is lipidated: N-palmitoyl cysteine. Cys21 is lipidated: S-diacylglycerol cysteine. The 91-residue stretch at 134–224 folds into the PpiC domain; that stretch reads KPEIKASHIL…NGYHIIKLTG (91 aa).

Belongs to the PrsA family.

The protein localises to the cell membrane. It catalyses the reaction [protein]-peptidylproline (omega=180) = [protein]-peptidylproline (omega=0). Plays a major role in protein secretion by helping the post-translocational extracellular folding of several secreted proteins. Important for the secretion of the protective antigen. The three PsrA proteins in this organism show different but overlapping substrate specificities. The polypeptide is Foldase protein PrsA 2 (prsA2) (Bacillus anthracis).